The sequence spans 328 residues: Phenylalanine--tRNA ligase alpha subunit (328 aa).

Glu253 serves as a coordination point for Mg(2+).

The protein belongs to the class-II aminoacyl-tRNA synthetase family. Phe-tRNA synthetase alpha subunit type 1 subfamily. In terms of assembly, tetramer of two alpha and two beta subunits. Mg(2+) is required as a cofactor.

The protein resides in the cytoplasm. It carries out the reaction tRNA(Phe) + L-phenylalanine + ATP = L-phenylalanyl-tRNA(Phe) + AMP + diphosphate + H(+). The polypeptide is Phenylalanine--tRNA ligase alpha subunit (Actinobacillus pleuropneumoniae serotype 7 (strain AP76)).